Here is a 202-residue protein sequence, read N- to C-terminus: Inner membrane-spanning protein YciB (202 aa).

6 helical membrane-spanning segments follow: residues 3 to 23, 46 to 66, 73 to 93, 100 to 120, 145 to 165, and 173 to 193; these read ILFDLLPVILFFVAYKIAGGN, ILLATAVAILATIAQIGWVWM, TMLWISLAIIAVFGGATLFFH, WKPTALYWLFGGTLTVSAVIF, LAWAGFFILMGFLNLYVAYNF, and FKLFGGMGLMLLFVLGQGFYL.

The protein belongs to the YciB family.

It localises to the cell inner membrane. Functionally, plays a role in cell envelope biogenesis, maintenance of cell envelope integrity and membrane homeostasis. This is Inner membrane-spanning protein YciB from Aromatoleum aromaticum (strain DSM 19018 / LMG 30748 / EbN1) (Azoarcus sp. (strain EbN1)).